A 206-amino-acid chain; its full sequence is Large ribosomal subunit protein uL22m (206 aa).

The transit peptide at 1–40 (MAAALLRELGALWVPNLRIWTTQMLRVLPQSCIHTSTSLD) directs the protein to the mitochondrion.

It belongs to the universal ribosomal protein uL22 family. In terms of assembly, component of the mitochondrial ribosome large subunit (39S) which comprises a 16S rRNA and about 50 distinct proteins.

The protein resides in the mitochondrion. The protein is Large ribosomal subunit protein uL22m (Mrpl22) of Rattus norvegicus (Rat).